We begin with the raw amino-acid sequence, 646 residues long: Depudecin biosynthesis cluster-specific transcription activator DEP6 (646 aa).

Positions 16–43 form a DNA-binding region, zn(2)-C6 fungal-type; the sequence is CEICRERKVRCDRALPKCRRCDRLNQPC. Disordered regions lie at residues 76-130 and 345-366; these read TTAA…SQSQ and KSEH…LALP. Positions 349–360 are enriched in polar residues; it reads SQGMQNRETQSG.

It is found in the nucleus. Its function is as follows. Transcription factor that positively regulates the expression of the gene cluster that mediates the biosynthesis of depudecin, a highly oxidized eleven-carbon linear polyketide that acts as a histone deacetylase (HDAC) inhibitor and makes a small contribution to pathogenesis. The chain is Depudecin biosynthesis cluster-specific transcription activator DEP6 from Alternaria brassicicola (Dark leaf spot agent).